The following is a 474-amino-acid chain: MTKLSIEPVTRVEGHGKVTLSFDDSGKLDKVNFHVVEVRGFEKFLEGRYIEDAPIFTPRICGICQVSHHLASAKAVDNVFGVKIPETANMLRNLIHQASNVHSHALHFGMLASPDLMFPTTDDALKRNLLGVAGENMDMIKDSIAMRKVGQTIVQKVGGRAIHPVTAIVGGQSKPLTEEERDELLTLSDNLVETAERTLNVGKEMVENLKEKDLMNLGYFESYHMGLVNNGAQDIYEGNIRVVNSEGKIEYEFDPAEYANYITEGVRPYSYLKFLALLKRRGEGKGAYRVNTLSRLNVCDKMPTPIAQKYYEEFVKTYGKPAHQPMLFHYARLIELLSSSELIRKFLEDDKIVDTDVRAEVDPKNITGEGVGCVEAPRGTLIHHFKTDDRGIINDTNLVVATVQNNPAMDIGVQKVAEKYIKTPEVAKPHILNHMEMVIRAYDPCLSCATHTIGEEPKILSIHVCQGGKLIKTL.

The Ni(2+) site is built by Cys61, Cys64, Cys445, and Cys448.

It belongs to the [NiFe]/[NiFeSe] hydrogenase large subunit family. In terms of assembly, the F420-non-reducing hydrogenase vhc is composed of three subunits; VhcA, VhcD and VhcG. Ni(2+) is required as a cofactor.

This chain is F420-non-reducing hydrogenase vhc subunit A (vhcA), found in Methanococcus voltae.